Reading from the N-terminus, the 171-residue chain is uncharacterized protein (171 aa).

Disordered stretches follow at residues D27–L53 and G82–S108. The span at G32–K50 shows a compositional bias: polar residues.

This is an uncharacterized protein from Homo sapiens (Human).